The following is a 415-amino-acid chain: Histidine--tRNA ligase (415 aa).

It belongs to the class-II aminoacyl-tRNA synthetase family. In terms of assembly, homodimer.

The protein localises to the cytoplasm. It catalyses the reaction tRNA(His) + L-histidine + ATP = L-histidyl-tRNA(His) + AMP + diphosphate + H(+). The chain is Histidine--tRNA ligase from Rhodospirillum rubrum (strain ATCC 11170 / ATH 1.1.1 / DSM 467 / LMG 4362 / NCIMB 8255 / S1).